Consider the following 1295-residue polypeptide: Phosphoribosylformylglycinamidine synthase (1295 aa).

The tract at residues 305 to 327 (WPGAATGSGGEIRDEGATGRGAK) is disordered. ATP-binding positions include 307–318 (GAATGSGGEIRD) and Ala-678. 3 residues coordinate Mg(2+): Glu-718, Asn-722, and Asp-884. Ser-886 contributes to the ATP binding site. The 254-residue stretch at 1042–1295 (VAVLREQGVN…IFRNARKQLG (254 aa)) folds into the Glutamine amidotransferase type-1 domain. Catalysis depends on Cys-1135, which acts as the Nucleophile. Active-site residues include His-1260 and Glu-1262.

It in the N-terminal section; belongs to the FGAMS family. As to quaternary structure, monomer.

It is found in the cytoplasm. It catalyses the reaction N(2)-formyl-N(1)-(5-phospho-beta-D-ribosyl)glycinamide + L-glutamine + ATP + H2O = 2-formamido-N(1)-(5-O-phospho-beta-D-ribosyl)acetamidine + L-glutamate + ADP + phosphate + H(+). The protein operates within purine metabolism; IMP biosynthesis via de novo pathway; 5-amino-1-(5-phospho-D-ribosyl)imidazole from N(2)-formyl-N(1)-(5-phospho-D-ribosyl)glycinamide: step 1/2. Its function is as follows. Phosphoribosylformylglycinamidine synthase involved in the purines biosynthetic pathway. Catalyzes the ATP-dependent conversion of formylglycinamide ribonucleotide (FGAR) and glutamine to yield formylglycinamidine ribonucleotide (FGAM) and glutamate. This is Phosphoribosylformylglycinamidine synthase from Shigella sonnei (strain Ss046).